Here is a 203-residue protein sequence, read N- to C-terminus: uncharacterized protein (203 aa).

Residues 89–109 (CEIPFAACSVLSWSLPTIAAL) form a helical membrane-spanning segment.

Its subcellular location is the membrane. This is an uncharacterized protein from Saccharomyces cerevisiae (strain ATCC 204508 / S288c) (Baker's yeast).